The following is a 157-amino-acid chain: Small ribosomal subunit protein uS7 (157 aa).

This sequence belongs to the universal ribosomal protein uS7 family. In terms of assembly, part of the 30S ribosomal subunit. Contacts proteins S9 and S11.

One of the primary rRNA binding proteins, it binds directly to 16S rRNA where it nucleates assembly of the head domain of the 30S subunit. Is located at the subunit interface close to the decoding center, probably blocks exit of the E-site tRNA. This Leptospira interrogans serogroup Icterohaemorrhagiae serovar copenhageni (strain Fiocruz L1-130) protein is Small ribosomal subunit protein uS7.